The primary structure comprises 690 residues: Calpain-9 (690 aa).

The interval 1–23 (MPYLHRSLRPQPQPVPGDARTIH) is disordered. The region spanning 42-337 (LFEDADFPAS…FDKVEICNLT (296 aa)) is the Calpain catalytic domain. Leu81, Gly83, and Asp88 together coordinate Ca(2+). The active site involves Cys97. Position 167 (Glu167) interacts with Ca(2+). Catalysis depends on residues His254 and Asn278. Glu284, Asp291, Leu312, Asp314, and Glu316 together coordinate Ca(2+). The interval 338–521 (PDALEDSALH…PQEEETEEEQ (184 aa)) is domain III. 3 consecutive EF-hand domains span residues 518 to 552 (EEEQQFRALFQRVAGEDMEVSAEELEYVLNAVLQK), 561 to 589 (LSLLSCRNIISLMDTSGNGKLEFEEFRVF), and 591 to 626 (DKLKHWMDLFLQFDVDKSGTMSSYELRTALKAAGFQ). A domain IV region spans residues 522–690 (QFRALFQRVA…NEFISLTMNI (169 aa)). Residues Asp574, Ser576, Asn578, Lys580, Glu585, Asp604, Asp606, Ser608, Thr610, and Glu615 each coordinate Ca(2+).

It belongs to the peptidase C2 family. As to expression, predominantly expressed in stomach and small intestine, although low levels of expression in other organs.

It localises to the cytoplasm. Its function is as follows. Calcium-regulated non-lysosomal thiol-protease. The chain is Calpain-9 (Capn9) from Mus musculus (Mouse).